Reading from the N-terminus, the 141-residue chain is Putative pre-16S rRNA nuclease (141 aa).

This sequence belongs to the YqgF nuclease family.

Its subcellular location is the cytoplasm. In terms of biological role, could be a nuclease involved in processing of the 5'-end of pre-16S rRNA. The chain is Putative pre-16S rRNA nuclease from Aliivibrio fischeri (strain MJ11) (Vibrio fischeri).